The sequence spans 652 residues: Acetyl-coenzyme A synthetase (652 aa).

Residues 191–194 (RAGR), Thr-311, and Asn-335 contribute to the CoA site. ATP-binding positions include 387 to 389 (GEP), 411 to 416 (DTWWQT), Asp-500, and Arg-515. Ser-523 provides a ligand contact to CoA. Arg-526 provides a ligand contact to ATP. Mg(2+) is bound by residues Val-537, His-539, and Ile-542. Arg-584 contributes to the CoA binding site. Lys-609 carries the N6-acetyllysine modification.

Belongs to the ATP-dependent AMP-binding enzyme family. Requires Mg(2+) as cofactor. Post-translationally, acetylated. Deacetylation by the SIR2-homolog deacetylase activates the enzyme.

The catalysed reaction is acetate + ATP + CoA = acetyl-CoA + AMP + diphosphate. Functionally, catalyzes the conversion of acetate into acetyl-CoA (AcCoA), an essential intermediate at the junction of anabolic and catabolic pathways. Acs undergoes a two-step reaction. In the first half reaction, Acs combines acetate with ATP to form acetyl-adenylate (AcAMP) intermediate. In the second half reaction, it can then transfer the acetyl group from AcAMP to the sulfhydryl group of CoA, forming the product AcCoA. In terms of biological role, enables the cell to use acetate during aerobic growth to generate energy via the TCA cycle, and biosynthetic compounds via the glyoxylate shunt. Acetylates CheY, the response regulator involved in flagellar movement and chemotaxis. The chain is Acetyl-coenzyme A synthetase from Sodalis glossinidius (strain morsitans).